A 301-amino-acid chain; its full sequence is GTPase Era (301 aa).

The 169-residue stretch at 7 to 175 (YCGFIAIVGR…AGIVRKHLPE (169 aa)) folds into the Era-type G domain. Residues 15–22 (GRPNVGKS) form a G1 region. GTP is bound at residue 15 to 22 (GRPNVGKS). A G2 region spans residues 41 to 45 (QTTRH). Residues 62-65 (DTPG) form a G3 region. GTP is bound by residues 62 to 66 (DTPGL) and 124 to 127 (NKVD). The interval 124–127 (NKVD) is G4. A G5 region spans residues 154–156 (ISA). Residues 206-283 (LGAELPYSVT…HLELWVKVKS (78 aa)) form the KH type-2 domain.

Belongs to the TRAFAC class TrmE-Era-EngA-EngB-Septin-like GTPase superfamily. Era GTPase family. As to quaternary structure, monomer.

The protein resides in the cytoplasm. Its subcellular location is the cell inner membrane. In terms of biological role, an essential GTPase that binds both GDP and GTP, with rapid nucleotide exchange. Plays a role in 16S rRNA processing and 30S ribosomal subunit biogenesis and possibly also in cell cycle regulation and energy metabolism. The polypeptide is GTPase Era (Salmonella agona (strain SL483)).